The sequence spans 192 residues: uncharacterized protein (192 aa).

This is an uncharacterized protein from Acidianus convivator (ATV).